The primary structure comprises 764 residues: Dehydrocurvularin biosynthesis regulator (764 aa).

A DNA-binding region (zn(2)-C6 fungal-type) is located at residues 28–59 (CWECKRRKMKCIFDPRITSTSCNGCRQRGSPC). Disordered stretches follow at residues 73 to 94 (HGAN…SDDA), 112 to 136 (YRYL…ASTC), and 633 to 672 (FPTS…PALS). A compositionally biased stretch (polar residues) spans 77-88 (DSASLDASTPIA). The span at 663-672 (HPNTPSPALS) shows a compositional bias: polar residues.

The protein resides in the nucleus. In terms of biological role, transcription factor involved in regulation of the dehydrocurvularin biosynthesis gene cluster. This Alternaria cinerariae protein is Dehydrocurvularin biosynthesis regulator.